The following is a 550-amino-acid chain: Arginine--tRNA ligase (550 aa).

The short motif at 130–140 (ANPTGPIHLGG) is the 'HIGH' region element.

Belongs to the class-I aminoacyl-tRNA synthetase family. As to quaternary structure, monomer.

The protein localises to the cytoplasm. The catalysed reaction is tRNA(Arg) + L-arginine + ATP = L-arginyl-tRNA(Arg) + AMP + diphosphate. In Corynebacterium glutamicum (strain R), this protein is Arginine--tRNA ligase.